Consider the following 462-residue polypeptide: Squalene synthase LSS (462 aa).

Positions 48 and 73 each coordinate NADP(+). Residues D76, E79, and D80 each coordinate Mg(2+). R214, K314, and R316 together coordinate NADP(+). The next 2 helical transmembrane spans lie at 399-419 and 436-456; these read LVLV…PLLW and LGLP…YQVF.

This sequence belongs to the phytoene/squalene synthase family. Requires Mg(2+) as cofactor.

The protein resides in the membrane. The catalysed reaction is 2 (2E,6E)-farnesyl diphosphate + NADH + H(+) = squalene + 2 diphosphate + NAD(+). The enzyme catalyses 2 (2E,6E)-farnesyl diphosphate + NADPH + H(+) = squalene + 2 diphosphate + NADP(+). Its function is as follows. Converts farnesyl diphosphate (FPP) into squalene, a precursor for sterol biosynthesis in eukaryotes. The sequence is that of Squalene synthase LSS from Botryococcus braunii (Green alga).